We begin with the raw amino-acid sequence, 551 residues long: Putative transport protein CGSHiEE_03135 (551 aa).

Helical transmembrane passes span 4 to 24 (IAITISLLALVAVIGLWIGHW), 28 to 48 (GVGLGIGGVLFGGIIVAHFTD), 65 to 85 (FGLILFVYTIGIQVGPGFFSS), 95 to 115 (AFAILIIVLGSIAVVLVHKIA), and 157 to 177 (VSYAMAYPFGICGILLAMWLI). RCK C-terminal domains are found at residues 191–275 (RFNA…IIGY) and 277–360 (VDAP…VIGN). 6 helical membrane passes run 370–390 (MLPVFIGIGLGVLVGSIPFYI), 402–424 (AGGPLVVVLILARIGTIGKLYWF), 438–458 (IVLFLAVVGLKSGGSFFDTLV), 463–483 (LEWMGYGIFITFVPLIIAGTI), 492–512 (YLTICGLLAGSMTDPPALAFA), and 529–549 (VYPLVMFLRIMSPQLLAVLLW).

It belongs to the AAE transporter (TC 2.A.81) family. YidE subfamily.

The protein localises to the cell membrane. This chain is Putative transport protein CGSHiEE_03135, found in Haemophilus influenzae (strain PittEE).